An 88-amino-acid chain; its full sequence is Small ribosomal subunit protein bS16 (88 aa).

It belongs to the bacterial ribosomal protein bS16 family.

This Thermus aquaticus protein is Small ribosomal subunit protein bS16.